Consider the following 321-residue polypeptide: Anthranilate phosphoribosyltransferase (321 aa).

5-phospho-alpha-D-ribose 1-diphosphate-binding positions include glycine 72, 75–76 (GD), threonine 80, 82–85 (NVST), 99–107 (KHGNVSITS), and serine 111. Glycine 72 contributes to the anthranilate binding site. Residue serine 84 participates in Mg(2+) binding. Residue asparagine 102 participates in anthranilate binding. Anthranilate is bound at residue arginine 157. Aspartate 216 and glutamate 217 together coordinate Mg(2+).

The protein belongs to the anthranilate phosphoribosyltransferase family. Homodimer. Mg(2+) is required as a cofactor.

The catalysed reaction is N-(5-phospho-beta-D-ribosyl)anthranilate + diphosphate = 5-phospho-alpha-D-ribose 1-diphosphate + anthranilate. Its pathway is amino-acid biosynthesis; L-tryptophan biosynthesis; L-tryptophan from chorismate: step 2/5. Its function is as follows. Catalyzes the transfer of the phosphoribosyl group of 5-phosphorylribose-1-pyrophosphate (PRPP) to anthranilate to yield N-(5'-phosphoribosyl)-anthranilate (PRA). The chain is Anthranilate phosphoribosyltransferase from Methanococcus maripaludis (strain C5 / ATCC BAA-1333).